The following is a 329-amino-acid chain: GTP 3',8-cyclase (329 aa).

The Radical SAM core domain occupies 8–234; it reads AFARKYYYLR…QLRQRSDGPA (227 aa). A GTP-binding site is contributed by Arg-17. [4Fe-4S] cluster contacts are provided by Cys-24 and Cys-28. Position 30 (Tyr-30) interacts with S-adenosyl-L-methionine. Position 31 (Cys-31) interacts with [4Fe-4S] cluster. Arg-68 serves as a coordination point for GTP. Position 72 (Gly-72) interacts with S-adenosyl-L-methionine. Thr-99 contacts GTP. Ser-123 contributes to the S-adenosyl-L-methionine binding site. Lys-160 contacts GTP. Position 194 (Met-194) interacts with S-adenosyl-L-methionine. Cys-257 and Cys-260 together coordinate [4Fe-4S] cluster. 262-264 lines the GTP pocket; that stretch reads RLR. A [4Fe-4S] cluster-binding site is contributed by Cys-274.

It belongs to the radical SAM superfamily. MoaA family. As to quaternary structure, monomer and homodimer. [4Fe-4S] cluster serves as cofactor.

The catalysed reaction is GTP + AH2 + S-adenosyl-L-methionine = (8S)-3',8-cyclo-7,8-dihydroguanosine 5'-triphosphate + 5'-deoxyadenosine + L-methionine + A + H(+). It participates in cofactor biosynthesis; molybdopterin biosynthesis. In terms of biological role, catalyzes the cyclization of GTP to (8S)-3',8-cyclo-7,8-dihydroguanosine 5'-triphosphate. The chain is GTP 3',8-cyclase from Escherichia coli O17:K52:H18 (strain UMN026 / ExPEC).